The sequence spans 218 residues: Ubiquitin-conjugating enzyme E2-24 kDa (218 aa).

The 146-residue stretch at 3 to 148 (SSKRRIETDV…IKEYIDKYAT (146 aa)) folds into the UBC core domain. The active-site Glycyl thioester intermediate is Cys85. The interval 154–218 (QMFGGDNDSD…DDDYDEVANQ (65 aa)) is disordered. Composition is skewed to acidic residues over residues 160 to 183 (NDSD…EDMD) and 192 to 218 (DSVD…VANQ).

Belongs to the ubiquitin-conjugating enzyme family.

The protein localises to the cytoplasm. The catalysed reaction is S-ubiquitinyl-[E1 ubiquitin-activating enzyme]-L-cysteine + [E2 ubiquitin-conjugating enzyme]-L-cysteine = [E1 ubiquitin-activating enzyme]-L-cysteine + S-ubiquitinyl-[E2 ubiquitin-conjugating enzyme]-L-cysteine.. The protein operates within protein modification; protein ubiquitination. Its function is as follows. Catalyzes the covalent attachment of ubiquitin to other proteins. Required for the adaptation to the presence of glucose in the growth medium; mediates the degradation of enzymes involved in gluconeogenesis when cells are shifted to glucose-containing medium. Required for proteasome-dependent catabolite degradation of fructose-1,6-bisphosphatase (FBP1). The polypeptide is Ubiquitin-conjugating enzyme E2-24 kDa (UBC8) (Saccharomyces cerevisiae (strain ATCC 204508 / S288c) (Baker's yeast)).